We begin with the raw amino-acid sequence, 142 residues long: Large ribosomal subunit protein bL17 (142 aa).

This sequence belongs to the bacterial ribosomal protein bL17 family. Part of the 50S ribosomal subunit. Contacts protein L32.

This is Large ribosomal subunit protein bL17 from Wolbachia pipientis subsp. Culex pipiens (strain wPip).